Reading from the N-terminus, the 144-residue chain is Flagellar assembly factor FliW (144 aa).

The protein belongs to the FliW family. Interacts with translational regulator CsrA and flagellin(s).

It is found in the cytoplasm. Functionally, acts as an anti-CsrA protein, binds CsrA and prevents it from repressing translation of its target genes, one of which is flagellin. Binds to flagellin and participates in the assembly of the flagellum. This is Flagellar assembly factor FliW from Geobacillus sp. (strain WCH70).